We begin with the raw amino-acid sequence, 76 residues long: Sec-independent protein translocase protein TatA (76 aa).

The chain crosses the membrane as a helical span at residues 1-21 (MGSFSIWHWLIVLVIVMLIFG). Residues 47–76 (NADKPAEEAQPTQQVGGHTIDVEVKEKTKS) form a disordered region. Over residues 66 to 76 (IDVEVKEKTKS) the composition is skewed to basic and acidic residues.

This sequence belongs to the TatA/E family. In terms of assembly, the Tat system comprises two distinct complexes: a TatABC complex, containing multiple copies of TatA, TatB and TatC subunits, and a separate TatA complex, containing only TatA subunits. Substrates initially bind to the TatABC complex, which probably triggers association of the separate TatA complex to form the active translocon.

The protein localises to the cell inner membrane. In terms of biological role, part of the twin-arginine translocation (Tat) system that transports large folded proteins containing a characteristic twin-arginine motif in their signal peptide across membranes. TatA could form the protein-conducting channel of the Tat system. This Dechloromonas aromatica (strain RCB) protein is Sec-independent protein translocase protein TatA.